We begin with the raw amino-acid sequence, 236 residues long: Ureidoacrylate amidohydrolase RutB (236 aa).

The active-site Proton acceptor is the D24. K133 is an active-site residue. C166 functions as the Nucleophile in the catalytic mechanism.

This sequence belongs to the isochorismatase family. RutB subfamily.

It catalyses the reaction (Z)-3-ureidoacrylate + H2O + H(+) = (Z)-3-aminoacrylate + NH4(+) + CO2. It carries out the reaction (Z)-3-ureidoacrylate + H2O = (Z)-3-aminoacrylate + carbamate + H(+). The enzyme catalyses (Z)-2-methylureidoacrylate + H2O + H(+) = (Z)-2-methylaminoacrylate + NH4(+) + CO2. Functionally, hydrolyzes ureidoacrylate to form aminoacrylate and carbamate. The carbamate hydrolyzes spontaneously, thereby releasing one of the nitrogen atoms of the pyrimidine ring as ammonia and one of its carbon atoms as CO2. The sequence is that of Ureidoacrylate amidohydrolase RutB from Klebsiella variicola (strain At-22).